An 804-amino-acid polypeptide reads, in one-letter code: Exocyst complex component 6 (804 aa).

This sequence belongs to the SEC15 family. In terms of assembly, the exocyst complex is composed of EXOC1, EXOC2, EXOC3, EXOC4, EXOC5, EXOC6, EXOC7 and EXOC8. Interacts with CNTRL. Interacts with RAB11A in a GTP-dependent manner.

The protein resides in the cytoplasm. Its subcellular location is the perinuclear region. The protein localises to the cell projection. It is found in the growth cone. It localises to the midbody. The protein resides in the midbody ring. Component of the exocyst complex involved in the docking of exocytic vesicles with fusion sites on the plasma membrane. Together with RAB11A, RAB3IP, RAB8A, PARD3, PRKCI, ANXA2, CDC42 and DNMBP promotes transcytosis of PODXL to the apical membrane initiation sites (AMIS), apical surface formation and lumenogenesis. This chain is Exocyst complex component 6 (EXOC6), found in Homo sapiens (Human).